We begin with the raw amino-acid sequence, 163 residues long: Phosphopantetheine adenylyltransferase (163 aa).

Serine 8 provides a ligand contact to substrate. Residues 8-9 and histidine 16 each bind ATP; that span reads SF. Residues lysine 40, threonine 72, and arginine 86 each coordinate substrate. ATP contacts are provided by residues 87–89, glutamate 97, and 122–128; these read GLR and HSFLSSS.

Belongs to the bacterial CoaD family. Homohexamer. It depends on Mg(2+) as a cofactor.

It localises to the cytoplasm. It catalyses the reaction (R)-4'-phosphopantetheine + ATP + H(+) = 3'-dephospho-CoA + diphosphate. Its pathway is cofactor biosynthesis; coenzyme A biosynthesis; CoA from (R)-pantothenate: step 4/5. Functionally, reversibly transfers an adenylyl group from ATP to 4'-phosphopantetheine, yielding dephospho-CoA (dPCoA) and pyrophosphate. The sequence is that of Phosphopantetheine adenylyltransferase from Synechococcus sp. (strain CC9902).